The following is a 189-amino-acid chain: Flavin prenyltransferase UbiX (189 aa).

Residues G10 to S12, S37, S88 to T91, and R123 contribute to the FMN site. Dimethylallyl phosphate-binding residues include Y153 and R169.

This sequence belongs to the UbiX/PAD1 family.

It catalyses the reaction dimethylallyl phosphate + FMNH2 = prenylated FMNH2 + phosphate. The protein operates within cofactor biosynthesis; ubiquinone biosynthesis. In terms of biological role, flavin prenyltransferase that catalyzes the synthesis of the prenylated FMN cofactor (prenyl-FMN) for 4-hydroxy-3-polyprenylbenzoic acid decarboxylase UbiD. The prenyltransferase is metal-independent and links a dimethylallyl moiety from dimethylallyl monophosphate (DMAP) to the flavin N5 and C6 atoms of FMN. This chain is Flavin prenyltransferase UbiX, found in Salmonella typhi.